The chain runs to 1217 residues: Inactive disease resistance protein RPS4 (1217 aa).

Positions 14–175 constitute a TIR domain; it reads PQHQVFINFR…EIVKAVKTAL (162 aa). Glutamate 88 is an active-site residue. Positions 211 to 472 constitute an NB-ARC domain; that stretch reads EQRLKDLEEK…FRSQDKDYVE (262 aa). LRR repeat units lie at residues 260–285, 436–459, 614–636, 637–659, 682–706, 708–728, 729–749, 750–774, 796–818, 819–842, and 861–887; these read HALI…LLGE, PNIV…AFLD, LKEV…DFNP, INLV…DKDT, AEKL…MKKM, MLAF…EMNL, ISLK…PLIS, DNIE…KLQR, LKAL…EIDI, SFLN…SVQY, and LSQL…NLQC. The interval 1162 to 1195 is disordered; that stretch reads TEGVDGRVKKKKKTRMDNGRPKKKQRSGRDDNQT. The Nuclear localization signal signature appears at 1170–1177; sequence KKKKKTRM.

In terms of assembly, interacts with EDS1.

It is found in the nucleus. It catalyses the reaction NAD(+) + H2O = ADP-D-ribose + nicotinamide + H(+). This Arabidopsis thaliana (Mouse-ear cress) protein is Inactive disease resistance protein RPS4 (RPS4).